The primary structure comprises 449 residues: Capsid protein (449 aa).

Positions 1 to 43 are DNA-binding; sequence MERRARRPRGRFYAFRRGRWNHLKRLRRRYKFRHRRRQRYRRR. The nuclear localization signals stretch occupies residues 6-47; it reads RRPRGRFYAFRRGRWNHLKRLRRRYKFRHRRRQRYRRRAFRK.

The protein belongs to the gyrovirus capsid protein family. As to quaternary structure, homomultimer (Potential). Interacts with Rep; this interaction relocates Rep into the nucleus.

The protein resides in the host nucleus. The protein localises to the virion. Its function is as follows. Self-assembles to form the virion icosahedral capsid with a T=1 symmetry. This very small capsid (25 nm in diameter) allows the virus to be very stable in the environment and resistant to some disinfectants, including detergents. Essential for the initial attachment to host receptors. After attachment, the virus is endocytosed and traffics to the nucleus. The capsid protein binds and transports the viral genome and Rep across the nuclear envelope. This is Capsid protein (VP1) from Chicken anemia virus (isolate Japan 82-2) (CAV).